The primary structure comprises 185 residues: Ribosome-recycling factor (185 aa).

It belongs to the RRF family.

The protein resides in the cytoplasm. In terms of biological role, responsible for the release of ribosomes from messenger RNA at the termination of protein biosynthesis. May increase the efficiency of translation by recycling ribosomes from one round of translation to another. The protein is Ribosome-recycling factor of Xylella fastidiosa (strain Temecula1 / ATCC 700964).